A 143-amino-acid chain; its full sequence is Large ribosomal subunit protein uL11 (143 aa).

The protein belongs to the universal ribosomal protein uL11 family. In terms of assembly, part of the ribosomal stalk of the 50S ribosomal subunit. Interacts with L10 and the large rRNA to form the base of the stalk. L10 forms an elongated spine to which L12 dimers bind in a sequential fashion forming a multimeric L10(L12)X complex. One or more lysine residues are methylated.

In terms of biological role, forms part of the ribosomal stalk which helps the ribosome interact with GTP-bound translation factors. The protein is Large ribosomal subunit protein uL11 of Caulobacter vibrioides (strain ATCC 19089 / CIP 103742 / CB 15) (Caulobacter crescentus).